Consider the following 120-residue polypeptide: Large ribosomal subunit protein uL18 (120 aa).

This sequence belongs to the universal ribosomal protein uL18 family. As to quaternary structure, part of the 50S ribosomal subunit; part of the 5S rRNA/L5/L18/L25 subcomplex. Contacts the 5S and 23S rRNAs.

Functionally, this is one of the proteins that bind and probably mediate the attachment of the 5S RNA into the large ribosomal subunit, where it forms part of the central protuberance. This chain is Large ribosomal subunit protein uL18, found in Treponema denticola (strain ATCC 35405 / DSM 14222 / CIP 103919 / JCM 8153 / KCTC 15104).